The sequence spans 362 residues: tRNA-specific 2-thiouridylase MnmA 3 (362 aa).

ATP contacts are provided by residues 11–18 (GMSGGIDS) and M37. C91 (nucleophile) is an active-site residue. A disulfide bridge connects residues C91 and C188. G115 serves as a coordination point for ATP. The tract at residues 137 to 139 (KDQ) is interaction with tRNA. Catalysis depends on C188, which acts as the Cysteine persulfide intermediate. Residues 296-297 (RY) are interaction with tRNA.

The protein belongs to the MnmA/TRMU family.

Its subcellular location is the cytoplasm. The catalysed reaction is S-sulfanyl-L-cysteinyl-[protein] + uridine(34) in tRNA + AH2 + ATP = 2-thiouridine(34) in tRNA + L-cysteinyl-[protein] + A + AMP + diphosphate + H(+). In terms of biological role, catalyzes the 2-thiolation of uridine at the wobble position (U34) of tRNA, leading to the formation of s(2)U34. This chain is tRNA-specific 2-thiouridylase MnmA 3, found in Bacteroides fragilis (strain YCH46).